The chain runs to 270 residues: Protein FAM110D (270 aa).

Positions methionine 1 to serine 16 are enriched in low complexity. 3 disordered regions span residues methionine 1–serine 83, arginine 117–alanine 142, and proline 186–valine 244. The span at arginine 68–leucine 78 shows a compositional bias: basic residues.

The protein belongs to the FAM110 family.

This is Protein FAM110D (FAM110D) from Bos taurus (Bovine).